The following is a 427-amino-acid chain: Gamma-glutamyl phosphate reductase (427 aa).

The protein belongs to the gamma-glutamyl phosphate reductase family.

The protein localises to the cytoplasm. The enzyme catalyses L-glutamate 5-semialdehyde + phosphate + NADP(+) = L-glutamyl 5-phosphate + NADPH + H(+). It participates in amino-acid biosynthesis; L-proline biosynthesis; L-glutamate 5-semialdehyde from L-glutamate: step 2/2. Its function is as follows. Catalyzes the NADPH-dependent reduction of L-glutamate 5-phosphate into L-glutamate 5-semialdehyde and phosphate. The product spontaneously undergoes cyclization to form 1-pyrroline-5-carboxylate. In Brucella ovis (strain ATCC 25840 / 63/290 / NCTC 10512), this protein is Gamma-glutamyl phosphate reductase.